The primary structure comprises 216 residues: Large ribosomal subunit protein uL3 (216 aa).

Glutamine 157 carries the N5-methylglutamine modification.

Belongs to the universal ribosomal protein uL3 family. Part of the 50S ribosomal subunit. Forms a cluster with proteins L14 and L19. Methylated by PrmB.

In terms of biological role, one of the primary rRNA binding proteins, it binds directly near the 3'-end of the 23S rRNA, where it nucleates assembly of the 50S subunit. This is Large ribosomal subunit protein uL3 from Stenotrophomonas maltophilia (strain R551-3).